Reading from the N-terminus, the 107-residue chain is Nucleoid-associated protein Oant_0022 (107 aa).

The protein belongs to the YbaB/EbfC family. Homodimer.

The protein localises to the cytoplasm. It is found in the nucleoid. Binds to DNA and alters its conformation. May be involved in regulation of gene expression, nucleoid organization and DNA protection. The polypeptide is Nucleoid-associated protein Oant_0022 (Brucella anthropi (strain ATCC 49188 / DSM 6882 / CCUG 24695 / JCM 21032 / LMG 3331 / NBRC 15819 / NCTC 12168 / Alc 37) (Ochrobactrum anthropi)).